The chain runs to 214 residues: MTRDSSLSGVFSRNWIFIRGVPAIRFLPPEGPPEIAFAGRSNVGKSSLINALVQQKGLARTSNTPGRTQELNYFIPDGFSGQRGDLPPFAVVDMPGYGFAAAPKNLVDAWTNLIFSYLRGRSTLKRVYLLIDSRHGIKNNDEDVLALLDKAAVSYQIVLTKSDKIKSNALEKLIMITQTKLLKHPAAYPEILATSSEKAYGLEELRAAILQTIA.

In terms of domain architecture, EngB-type G spans 31–214 (GPPEIAFAGR…LRAAILQTIA (184 aa)). Residues 39–46 (GRSNVGKS), 66–70 (GRTQE), 93–96 (DMPG), 160–163 (TKSD), and 194–196 (TSS) contribute to the GTP site. Residues Ser46 and Thr68 each contribute to the Mg(2+) site.

Belongs to the TRAFAC class TrmE-Era-EngA-EngB-Septin-like GTPase superfamily. EngB GTPase family. The cofactor is Mg(2+).

Its function is as follows. Necessary for normal cell division and for the maintenance of normal septation. The protein is Probable GTP-binding protein EngB of Bartonella tribocorum (strain CIP 105476 / IBS 506).